We begin with the raw amino-acid sequence, 107 residues long: ATP synthase peripheral stalk subunit F6, mitochondrial (107 aa).

The transit peptide at Met-1 to Phe-31 directs the protein to the mitochondrion. Lys-40, Lys-45, and Lys-78 each carry N6-acetyllysine. Lys-93 and Lys-98 each carry N6-acetyllysine; alternate. N6-succinyllysine; alternate is present on residues Lys-93 and Lys-98. Lys-104 carries the post-translational modification N6-acetyllysine.

The protein belongs to the eukaryotic ATPase subunit F6 family. Component of the ATP synthase complex composed at least of ATP5F1A/subunit alpha, ATP5F1B/subunit beta, ATP5MC1/subunit c (homooctomer), MT-ATP6/subunit a, MT-ATP8/subunit 8, ATP5ME/subunit e, ATP5MF/subunit f, ATP5MG/subunit g, ATP5MK/subunit k, ATP5MJ/subunit j, ATP5F1C/subunit gamma, ATP5F1D/subunit delta, ATP5F1E/subunit epsilon, ATP5PF/subunit F6, ATP5PB/subunit b, ATP5PD/subunit d, ATP5PO/subunit OSCP. ATP synthase complex consists of a soluble F(1) head domain (subunits alpha(3) and beta(3)) - the catalytic core - and a membrane F(0) domain - the membrane proton channel (subunits c, a, 8, e, f, g, k and j). These two domains are linked by a central stalk (subunits gamma, delta, and epsilon) rotating inside the F1 region and a stationary peripheral stalk (subunits F6, b, d, and OSCP).

It localises to the mitochondrion. The protein resides in the mitochondrion inner membrane. Functionally, subunit F6, of the mitochondrial membrane ATP synthase complex (F(1)F(0) ATP synthase or Complex V) that produces ATP from ADP in the presence of a proton gradient across the membrane which is generated by electron transport complexes of the respiratory chain. ATP synthase complex consist of a soluble F(1) head domain - the catalytic core - and a membrane F(1) domain - the membrane proton channel. These two domains are linked by a central stalk rotating inside the F(1) region and a stationary peripheral stalk. During catalysis, ATP synthesis in the catalytic domain of F(1) is coupled via a rotary mechanism of the central stalk subunits to proton translocation. In vivo, can only synthesize ATP although its ATP hydrolase activity can be activated artificially in vitro. Part of the complex F(0) domain. Part of the complex F(0) domain and the peripheric stalk, which acts as a stator to hold the catalytic alpha(3)beta(3) subcomplex and subunit a/ATP6 static relative to the rotary elements. This Pongo abelii (Sumatran orangutan) protein is ATP synthase peripheral stalk subunit F6, mitochondrial.